Consider the following 186-residue polypeptide: Transcription factor HES-3 (186 aa).

Residues 1–49 (MEKKRRARINVSLEQLKSLLEKHYSHQIRKRKLEKADILELSVKYMRSL) enclose the bHLH domain. An Orange domain is found at 65-99 (QPSGFRSCLPGVSQLLRRGDEVGSGLRCPLVPESA). Positions 128 to 186 (APAAGGPRSPPPLLLLPESLPGSSASVPPPQPASSRCAESPGLGLRVWRPWGSPGDDLN) are disordered. Positions 142–153 (LLPESLPGSSAS) are enriched in low complexity. The short motif at 175-178 (WRPW) is the WRPW motif element.

In terms of assembly, transcription repression requires formation of a complex with a corepressor protein of the Groucho/TLE family.

Its subcellular location is the nucleus. Transcriptional repressor of genes that require a bHLH protein for their transcription. In Homo sapiens (Human), this protein is Transcription factor HES-3 (HES3).